We begin with the raw amino-acid sequence, 997 residues long: FIP1[III]-like protein (997 aa).

Disordered stretches follow at residues 250 to 272 (ITSN…LNSV), 289 to 475 (AGSF…ETEG), 534 to 553 (SRSS…KEED), and 880 to 900 (QGKV…TIEQ). Positions 261–272 (SHSYGSKDLNSV) are enriched in polar residues. Composition is skewed to basic and acidic residues over residues 309–323 (TPSD…KEES), 334–346 (SVER…DRIR), 367–379 (ESLK…DQRE), and 388–404 (RLAE…EDSG). The short motif at 397–404 (IKRGEDSG) is the Nuclear localization signal element. Residues 534 to 547 (SRSSFDLNQRNSRS) are compositionally biased toward polar residues. Residues 930-963 (EIIEEVKGVEIDNERIQESLKKMEKRRERFKGTK) are a coiled coil.

It belongs to the FIP1 family. In terms of assembly, component of the cleavage and polyadenylation specificity factor (CPSF) complex. Forms a complex with cleavage and polyadenylation specificity factor (CPSF) subunits CLPS5, FIPS5, PAPS4, PCFS1, CSTF64 and CPSF30.

Its subcellular location is the nucleus. Functionally, component of the cleavage and polyadenylation specificity factor (CPSF) complex that plays a key role in pre-mRNA 3'-end formation, recognizing the AAUAAA signal sequence and interacting with poly(A) polymerase and other factors to bring about cleavage and poly(A) addition. FIP1L1 contributes to poly(A) site recognition and stimulates poly(A) addition. Binds to U-rich RNA sequence elements surrounding the poly(A) site. May act to tether poly(A) polymerase to the CPSF complex. The chain is FIP1[III]-like protein from Arabidopsis thaliana (Mouse-ear cress).